The following is a 150-amino-acid chain: Cytochrome c oxidase subunit 5A, mitochondrial (150 aa).

The N-terminal 41 residues, 1–41, are a transit peptide targeting the mitochondrion; that stretch reads MLGAALRRCAVAATTWAGPRGLLHSARTPGPAAAIQSVRCY. Residues 2-17 carry the SIFI-degron motif; sequence LGAALRRCAVAATTWA. An N6-acetyllysine mark is found at Lys-87 and Lys-113. Thr-141 bears the Phosphothreonine mark.

Belongs to the cytochrome c oxidase subunit 5A family. In terms of assembly, component of the cytochrome c oxidase (complex IV, CIV), a multisubunit enzyme composed of 14 subunits. The complex is composed of a catalytic core of 3 subunits MT-CO1, MT-CO2 and MT-CO3, encoded in the mitochondrial DNA, and 11 supernumerary subunits COX4I, COX5A, COX5B, COX6A, COX6B, COX6C, COX7A, COX7B, COX7C, COX8 and NDUFA4, which are encoded in the nuclear genome. The complex exists as a monomer or a dimer and forms supercomplexes (SCs) in the inner mitochondrial membrane with NADH-ubiquinone oxidoreductase (complex I, CI) and ubiquinol-cytochrome c oxidoreductase (cytochrome b-c1 complex, complex III, CIII), resulting in different assemblies (supercomplex SCI(1)III(2)IV(1) and megacomplex MCI(2)III(2)IV(2)). Interacts with AFG1L. Interacts with RAB5IF. Post-translationally, in response to mitochondrial stress, the precursor protein is ubiquitinated by the SIFI complex in the cytoplasm before mitochondrial import, leading to its degradation. Within the SIFI complex, UBR4 initiates ubiquitin chain that are further elongated or branched by KCMF1.

The protein resides in the mitochondrion inner membrane. It functions in the pathway energy metabolism; oxidative phosphorylation. In terms of biological role, component of the cytochrome c oxidase, the last enzyme in the mitochondrial electron transport chain which drives oxidative phosphorylation. The respiratory chain contains 3 multisubunit complexes succinate dehydrogenase (complex II, CII), ubiquinol-cytochrome c oxidoreductase (cytochrome b-c1 complex, complex III, CIII) and cytochrome c oxidase (complex IV, CIV), that cooperate to transfer electrons derived from NADH and succinate to molecular oxygen, creating an electrochemical gradient over the inner membrane that drives transmembrane transport and the ATP synthase. Cytochrome c oxidase is the component of the respiratory chain that catalyzes the reduction of oxygen to water. Electrons originating from reduced cytochrome c in the intermembrane space (IMS) are transferred via the dinuclear copper A center (CU(A)) of subunit 2 and heme A of subunit 1 to the active site in subunit 1, a binuclear center (BNC) formed by heme A3 and copper B (CU(B)). The BNC reduces molecular oxygen to 2 water molecules using 4 electrons from cytochrome c in the IMS and 4 protons from the mitochondrial matrix. This chain is Cytochrome c oxidase subunit 5A, mitochondrial (COX5A), found in Papio anubis (Olive baboon).